The sequence spans 196 residues: Peptidyl-tRNA hydrolase (196 aa).

Residue Tyr17 participates in tRNA binding. The Proton acceptor role is filled by His22. Residues Tyr69, Asn71, and Asn117 each coordinate tRNA.

It belongs to the PTH family. In terms of assembly, monomer.

It is found in the cytoplasm. The catalysed reaction is an N-acyl-L-alpha-aminoacyl-tRNA + H2O = an N-acyl-L-amino acid + a tRNA + H(+). Functionally, hydrolyzes ribosome-free peptidyl-tRNAs (with 1 or more amino acids incorporated), which drop off the ribosome during protein synthesis, or as a result of ribosome stalling. In terms of biological role, catalyzes the release of premature peptidyl moieties from peptidyl-tRNA molecules trapped in stalled 50S ribosomal subunits, and thus maintains levels of free tRNAs and 50S ribosomes. The chain is Peptidyl-tRNA hydrolase from Pseudarthrobacter chlorophenolicus (strain ATCC 700700 / DSM 12829 / CIP 107037 / JCM 12360 / KCTC 9906 / NCIMB 13794 / A6) (Arthrobacter chlorophenolicus).